The following is a 338-amino-acid chain: Ketol-acid reductoisomerase (NADP(+)) (338 aa).

Residues 1 to 181 (MQVYYDKDAD…GGGRAGVIET (181 aa)) enclose the KARI N-terminal Rossmann domain. NADP(+) contacts are provided by residues 24–27 (YGSQ), R47, S50, S52, and 82–85 (DEHQ). H107 is a catalytic residue. G133 is an NADP(+) binding site. A KARI C-terminal knotted domain is found at 182-327 (SFKDETETDL…AKLRDMMPWI (146 aa)). Mg(2+) contacts are provided by D190, E194, E226, and E230. S251 provides a ligand contact to substrate.

The protein belongs to the ketol-acid reductoisomerase family. Mg(2+) serves as cofactor.

It carries out the reaction (2R)-2,3-dihydroxy-3-methylbutanoate + NADP(+) = (2S)-2-acetolactate + NADPH + H(+). It catalyses the reaction (2R,3R)-2,3-dihydroxy-3-methylpentanoate + NADP(+) = (S)-2-ethyl-2-hydroxy-3-oxobutanoate + NADPH + H(+). It participates in amino-acid biosynthesis; L-isoleucine biosynthesis; L-isoleucine from 2-oxobutanoate: step 2/4. It functions in the pathway amino-acid biosynthesis; L-valine biosynthesis; L-valine from pyruvate: step 2/4. In terms of biological role, involved in the biosynthesis of branched-chain amino acids (BCAA). Catalyzes an alkyl-migration followed by a ketol-acid reduction of (S)-2-acetolactate (S2AL) to yield (R)-2,3-dihydroxy-isovalerate. In the isomerase reaction, S2AL is rearranged via a Mg-dependent methyl migration to produce 3-hydroxy-3-methyl-2-ketobutyrate (HMKB). In the reductase reaction, this 2-ketoacid undergoes a metal-dependent reduction by NADPH to yield (R)-2,3-dihydroxy-isovalerate. In Thioalkalivibrio sulfidiphilus (strain HL-EbGR7), this protein is Ketol-acid reductoisomerase (NADP(+)).